We begin with the raw amino-acid sequence, 364 residues long: Flagellar P-ring protein (364 aa).

The N-terminal stretch at Met1–Ala29 is a signal peptide.

Belongs to the FlgI family. As to quaternary structure, the basal body constitutes a major portion of the flagellar organelle and consists of four rings (L,P,S, and M) mounted on a central rod.

It localises to the periplasm. The protein localises to the bacterial flagellum basal body. Its function is as follows. Assembles around the rod to form the L-ring and probably protects the motor/basal body from shearing forces during rotation. The sequence is that of Flagellar P-ring protein from Dechloromonas aromatica (strain RCB).